Consider the following 130-residue polypeptide: Sulfurtransferase TusD (130 aa).

Cys-78 acts as the Cysteine persulfide intermediate in catalysis.

Belongs to the DsrE/TusD family. Heterohexamer, formed by a dimer of trimers. The hexameric TusBCD complex contains 2 copies each of TusB, TusC and TusD. The TusBCD complex interacts with TusE.

It localises to the cytoplasm. Its function is as follows. Part of a sulfur-relay system required for 2-thiolation of 5-methylaminomethyl-2-thiouridine (mnm(5)s(2)U) at tRNA wobble positions. Accepts sulfur from TusA and transfers it in turn to TusE. The chain is Sulfurtransferase TusD from Buchnera aphidicola subsp. Baizongia pistaciae (strain Bp).